An 880-amino-acid polypeptide reads, in one-letter code: MAQCSDLPEMAKAYEAAEVEKKWYQYWMEKSYFKPNPNSDKKPFVIIMPPPNVTGELHLGHALTATLEDIMIRWHRMQGEPTLWLPGVDHAGIAAQVVVERELAKQGKTRQQLGRELFLEKMWEWVNPCREKIRHQHMRLGASCDWDRETFTLDAGPVKAVREIFTNLYEKGLIYKGERIINWCPRCGTAVSDLEVDHKDLAGHIWHLRYPLEDGSGFVTVATTRPETMQGDTAVAIHPDDTRYAGMVGKNVVLPIMNRRIPVIADEAVDMAFGTGAVKVTPAHDPNDFEMGLRHNLPMITIQNRDTTMNENAGPCSGMTAKACREYVVSEMKSLGLLLRIEDYIHSVGHCQRCSAVIEPMVSKQWFVKMEPLAKPALEAVNSGRIQILPERFNKVYQNWMENIRDWCISRQLWWGHRIPVWYCPCGEMIVAKVDPTVCPKCGGTELEQDPDVLDTWFSSGLWPHSTLGWPDQTEDLKRFYPGTVMETAYDIIFFWVARMIVMGMEDMNEVPFRTVYLHGLIRDDKGEKMSKTKGNVIDPLKVIDQYGTDALRFAVTFGTSPGNDSKLGQTKLEAARNFANKLWNASRFVIMNLGEAKELTPEAELPLEDRWIISRMNRVTADVTRLMEEFQFGEAQRVLQDFIWGEFCDWYIELAKVRLRDEASVSPRPVLVRVLSSILRLLHPYMPFITEELWSYLRPYLPESLRETDIIVAPYPAADKTCFDEQAESVMGSLVEIVRSLRNLRAEHNVEISRYIQANIYAGDMASVLGNYLGAVETLSRARPVNILPGHYSGASTATEVVLVLTGIEVVVPMSTMVDLEVEAKRVKAEISELEIQIERLSTRLSDEQFLAKAPQAVVDKERIKLEGYIEKVSRLKSA.

A 'HIGH' region motif is present at residues 51–61; sequence PNVTGELHLGH. Positions 529–533 match the 'KMSKS' region motif; that stretch reads KMSKT. K532 is a binding site for ATP. A coiled-coil region spans residues 815-854; sequence MSTMVDLEVEAKRVKAEISELEIQIERLSTRLSDEQFLAK.

It belongs to the class-I aminoacyl-tRNA synthetase family. ValS type 1 subfamily. As to quaternary structure, monomer.

Its subcellular location is the cytoplasm. It catalyses the reaction tRNA(Val) + L-valine + ATP = L-valyl-tRNA(Val) + AMP + diphosphate. Its function is as follows. Catalyzes the attachment of valine to tRNA(Val). As ValRS can inadvertently accommodate and process structurally similar amino acids such as threonine, to avoid such errors, it has a 'posttransfer' editing activity that hydrolyzes mischarged Thr-tRNA(Val) in a tRNA-dependent manner. The sequence is that of Valine--tRNA ligase from Dehalococcoides mccartyi (strain CBDB1).